Consider the following 198-residue polypeptide: Ribonuclease HII (198 aa).

Residues 10-198 (QLVAGVDEVG…PVKRALGLAS (189 aa)) form the RNase H type-2 domain. Positions 16, 17, and 108 each coordinate a divalent metal cation.

It belongs to the RNase HII family. Mn(2+) serves as cofactor. It depends on Mg(2+) as a cofactor.

Its subcellular location is the cytoplasm. It carries out the reaction Endonucleolytic cleavage to 5'-phosphomonoester.. Its function is as follows. Endonuclease that specifically degrades the RNA of RNA-DNA hybrids. This chain is Ribonuclease HII, found in Shigella dysenteriae serotype 1 (strain Sd197).